We begin with the raw amino-acid sequence, 595 residues long: 73 kDa paraflagellar rod protein (595 aa).

Positions Asp294–Asp317 are disordered. Residues Asp317–Gly337 form a calmodulin-binding region.

As to quaternary structure, heterodimer of a 69 kDa and a 73 kDa protein.

The protein resides in the cell projection. Its subcellular location is the cilium. It localises to the flagellum. The protein localises to the cytoplasm. It is found in the cytoskeleton. Major component of the paraflagellar rod (PFR). The PFR is a highly ordered lattices of fibrous proteins that are located inside the flagellum and assume a fixed orientation with respect to the microtubular axoneme. This is 73 kDa paraflagellar rod protein (PFRC) from Trypanosoma brucei brucei.